Here is a 169-residue protein sequence, read N- to C-terminus: Anaerobic nitrite reductase NSHB3 (169 aa).

The region spanning 15–165 (RFTEEQEALV…LVAAIKQGMK (151 aa)) is the Globin domain. The short motif at 48–52 (EVAPS) is the Homodimerization element. The heme b site is built by Ser58, Lys72, His76, Arg106, Thr110, and His111. The Homodimerization signature appears at 118 to 130 (DAHFEVAKFALLE).

This sequence belongs to the plant globin family. In terms of assembly, homodimer. Heme b is required as a cofactor.

It localises to the cytoplasm. The protein localises to the nucleus. It catalyses the reaction Fe(III)-heme b-[protein] + nitric oxide + H2O = Fe(II)-heme b-[protein] + nitrite + 2 H(+). Phytoglobin that reduces nitrite to nitric oxide under anoxic conditions (e.g. during flooding or in waterlogged soil). May not function as an oxygen storage or transport protein. Has an unusually high affinity for O(2) through an hexacoordinate heme iron because of a very low dissociation constant. In Oryza sativa subsp. indica (Rice), this protein is Anaerobic nitrite reductase NSHB3.